We begin with the raw amino-acid sequence, 177 residues long: Ribosome maturation factor RimP (177 aa).

A compositionally biased stretch (basic and acidic residues) spans 153–171; sequence VEFNRKDTKNDNQTEHDNK. Positions 153–177 are disordered; it reads VEFNRKDTKNDNQTEHDNKTEEEEA.

Belongs to the RimP family.

Its subcellular location is the cytoplasm. Its function is as follows. Required for maturation of 30S ribosomal subunits. The protein is Ribosome maturation factor RimP of Streptomyces coelicolor (strain ATCC BAA-471 / A3(2) / M145).